The sequence spans 485 residues: NADH-quinone oxidoreductase subunit N (485 aa).

A run of 14 helical transmembrane segments spans residues 8–28, 35–55, 71–91, 105–125, 127–147, 159–179, 203–223, 235–255, 271–291, 297–317, 326–346, 373–393, 408–430, and 455–475; these read LIAL…MLSI, FLNA…LWFV, GFAM…CTFA, FYLL…ANHL, SLFL…GYAF, YTIL…LVYA, LLAG…LVPF, PAPV…GVVM, VVLA…ALSQ, LLGY…IALQ, VGVY…VVSL, AAVM…LGFI, WWLV…RVAV, and IVVL…QPLI.

This sequence belongs to the complex I subunit 2 family. As to quaternary structure, NDH-1 is composed of 13 different subunits. Subunits NuoA, H, J, K, L, M, N constitute the membrane sector of the complex.

It is found in the cell inner membrane. The enzyme catalyses a quinone + NADH + 5 H(+)(in) = a quinol + NAD(+) + 4 H(+)(out). Functionally, NDH-1 shuttles electrons from NADH, via FMN and iron-sulfur (Fe-S) centers, to quinones in the respiratory chain. The immediate electron acceptor for the enzyme in this species is believed to be ubiquinone. Couples the redox reaction to proton translocation (for every two electrons transferred, four hydrogen ions are translocated across the cytoplasmic membrane), and thus conserves the redox energy in a proton gradient. In Escherichia coli O7:K1 (strain IAI39 / ExPEC), this protein is NADH-quinone oxidoreductase subunit N.